A 299-amino-acid chain; its full sequence is Taste receptor type 2 member 42 (299 aa).

At 1-7 (MATELDK) the chain is on the extracellular side. Residues 8–28 (IFLILAIAEFIISMLGNVFIG) form a helical membrane-spanning segment. Residues 29-50 (LVNCSEGIKNQKVFSSDFILTS) lie on the Cytoplasmic side of the membrane. A helical membrane pass occupies residues 51-71 (LAISTIGQLLVILFDSFLVGL). The Extracellular portion of the chain corresponds to 72–101 (ASHLYTTYRLGKPVIMLWHMTNHLTTWLAT). The chain crosses the membrane as a helical span at residues 102 to 122 (CLSVFYFFKIAHFPHSLFLWL). Topologically, residues 123 to 127 (RWRMN) are cytoplasmic. A helical membrane pass occupies residues 128 to 148 (GMIAMLLILSLFLLIFDSSVL). At 149-187 (EIFIDISLNIIDKSSLTLYLDESKTLYDKLSILKTLLSL) the chain is on the extracellular side. Residues 188 to 208 (TSFIPFSLSLTSVLFLYLSLV) form a helical membrane-spanning segment. The Cytoplasmic segment spans residues 209-238 (RHTRNLKLSSLGSRDSSTEAHRRAMKMVMS). The chain crosses the membrane as a helical span at residues 239–259 (FLFLFIVHFFSLQVANWIFFM). Residues 260 to 265 (LWNNKY) lie on the Extracellular side of the membrane. The helical transmembrane segment at 266-286 (IKFVMLALNAFPSCHSFILIL) threads the bilayer. The Cytoplasmic portion of the chain corresponds to 287–299 (GNSKLRQTAVRLL).

This sequence belongs to the G-protein coupled receptor T2R family.

It is found in the membrane. In terms of biological role, receptor that may play a role in the perception of bitterness and is gustducin-linked. May play a role in sensing the chemical composition of the gastrointestinal content. The activity of this receptor may stimulate alpha gustducin, mediate PLC-beta-2 activation and lead to the gating of TRPM5. The sequence is that of Taste receptor type 2 member 42 (TAS2R42) from Gorilla gorilla gorilla (Western lowland gorilla).